The sequence spans 266 residues: Derlin-1 (266 aa).

The Cytoplasmic portion of the chain corresponds to 1-20; it reads MSSPGEFYNSLPPITKAYGT. The chain crosses the membrane as a helical span at residues 21 to 41; that stretch reads LCFFTTVATQLGLVAPVHIAL. Residues 42–55 are Lumenal-facing; that stretch reads IPELVLKQFQIWRL. A helical membrane pass occupies residues 56–76; sequence ITNLFFLGGFSINFGIRLLMI. Residues 77-94 are Cytoplasmic-facing; that stretch reads ARYGVQLEKGPFERRTAD. Residues 95–115 form a helical membrane-spanning segment; it reads FLWMMIFGSFTLLVLSVIPFF. At 116–156 the chain is on the lumenal side; that stretch reads WTPFLGVSLVFMLLYLWSREFPNANISLYGLVTLKAFYLPW. Residues 157 to 177 traverse the membrane as a helical segment; the sequence is AMLALDVIFGSPIMPDLLGII. At 178–266 the chain is on the cytoplasmic side; the sequence is AGHLYYFLTV…FRGRSYRLTD (89 aa). The segment at 235-266 is disordered; that stretch reads GGVGGGGAYSSARAPPESSNTAFRGRSYRLTD.

It belongs to the derlin family.

The protein resides in the endoplasmic reticulum membrane. Functionally, may be involved in the degradation process of specific misfolded endoplasmic reticulum (ER) luminal proteins. This is Derlin-1 (DER1) from Arabidopsis thaliana (Mouse-ear cress).